The sequence spans 862 residues: Dipeptidyl peptidase 9 (862 aa).

Active-site charge relay system residues include Ser-729, Asp-807, and His-839. Ser-729 serves as a coordination point for Val-boroPro.

It belongs to the peptidase S9B family. DPPIV subfamily. In terms of assembly, homodimer. Forms a ternary complex with NLRP1, composed of a DPP9 homodimer, one full-length NLRP1 protein, and one cleaved C-terminus of NLRP1 (NACHT, LRR and PYD domains-containing protein 1, C-terminus). Forms a ternary complex with CARD8, composed of a DPP9 homodimer, one full-length NLRP1 protein, and one cleaved C-terminus of CARD8 (Caspase recruitment domain-containing protein 8, C-terminus). In the ternary complex, only one subunit of the DPP9 homodimer is bound to NLRP1 or CARD8. In terms of tissue distribution, detected in kidney, skin, brain, thymus and liver (at protein level).

The protein localises to the cytoplasm. It localises to the cytosol. It carries out the reaction Release of an N-terminal dipeptide, Xaa-Yaa-|-Zaa-, from a polypeptide, preferentially when Yaa is Pro, provided Zaa is neither Pro nor hydroxyproline.. Inhibited by the serine proteinase inhibitor 4-(2-aminoethyl)benzenesulphonyl fluoride (AEBSF), and by di-isopropylfluorophosphate. Inhibited by Val-boroPro (Talabostat, PT-100), a non-selective inhibitor, which triggers pyroptosis in monocytes and macrophages. Val-boroPro inhibits activity by binding to the active site, mimicking a substrate-bound state, thereby displacing the C-terminal fragment of NLRP1, leading to activation of the NLRP1 inflammasome. In contrast, Val-boroPro does not directly displaces CARD8: it acts by promoting degradation of the N-terminal part of CARD8, leading to indirect disruption of the ternary complex. Its function is as follows. Dipeptidyl peptidase that cleaves off N-terminal dipeptides from proteins having a Pro or Ala residue at position 2. Acts as a key inhibitor of caspase-1-dependent monocyte and macrophage pyroptosis in resting cells by preventing activation of NLRP1 and CARD8. Sequesters the cleaved C-terminal part of NLRP1 and CARD8, which respectively constitute the active part of the NLRP1 and CARD8 inflammasomes, in a ternary complex, thereby preventing their oligomerization and activation. The dipeptidyl peptidase activity is required to suppress NLRP1 and CARD8; however, neither NLRP1 nor CARD8 are bona fide substrates of DPP9, suggesting the existence of substrate(s) required for NLRP1 and CARD8 inhibition. The polypeptide is Dipeptidyl peptidase 9 (Mus musculus (Mouse)).